Reading from the N-terminus, the 291-residue chain is 4-diphosphocytidyl-2-C-methyl-D-erythritol kinase (291 aa).

Lys12 is a catalytic residue. 95–105 contributes to the ATP binding site; it reads PDGGGLGGGSS. The active site involves Asp137.

This sequence belongs to the GHMP kinase family. IspE subfamily.

It catalyses the reaction 4-CDP-2-C-methyl-D-erythritol + ATP = 4-CDP-2-C-methyl-D-erythritol 2-phosphate + ADP + H(+). It participates in isoprenoid biosynthesis; isopentenyl diphosphate biosynthesis via DXP pathway; isopentenyl diphosphate from 1-deoxy-D-xylulose 5-phosphate: step 3/6. Its function is as follows. Catalyzes the phosphorylation of the position 2 hydroxy group of 4-diphosphocytidyl-2C-methyl-D-erythritol. This chain is 4-diphosphocytidyl-2-C-methyl-D-erythritol kinase, found in Alkalilimnicola ehrlichii (strain ATCC BAA-1101 / DSM 17681 / MLHE-1).